Here is an 896-residue protein sequence, read N- to C-terminus: Protein translocase subunit SecA (896 aa).

ATP-binding positions include glutamine 87, 105 to 109 (GEGKT), and aspartate 512. Disordered regions lie at residues 565 to 584 (RRID…PGSS) and 840 to 896 (EAAQ…AHEA). Zn(2+)-binding residues include cysteine 876, cysteine 878, cysteine 887, and histidine 888. Over residues 882–896 (KKYKHCHGNRAAHEA) the composition is skewed to basic residues.

This sequence belongs to the SecA family. As to quaternary structure, monomer and homodimer. Part of the essential Sec protein translocation apparatus which comprises SecA, SecYEG and auxiliary proteins SecDF-YajC and YidC. Zn(2+) serves as cofactor.

It localises to the cell inner membrane. It is found in the cytoplasm. It catalyses the reaction ATP + H2O + cellular proteinSide 1 = ADP + phosphate + cellular proteinSide 2.. In terms of biological role, part of the Sec protein translocase complex. Interacts with the SecYEG preprotein conducting channel. Has a central role in coupling the hydrolysis of ATP to the transfer of proteins into and across the cell membrane, serving both as a receptor for the preprotein-SecB complex and as an ATP-driven molecular motor driving the stepwise translocation of polypeptide chains across the membrane. The chain is Protein translocase subunit SecA from Mannheimia succiniciproducens (strain KCTC 0769BP / MBEL55E).